The primary structure comprises 135 residues: Holo-[acyl-carrier-protein] synthase (135 aa).

Residues Asp8 and Glu58 each contribute to the Mg(2+) site.

This sequence belongs to the P-Pant transferase superfamily. AcpS family. Requires Mg(2+) as cofactor.

It is found in the cytoplasm. The enzyme catalyses apo-[ACP] + CoA = holo-[ACP] + adenosine 3',5'-bisphosphate + H(+). In terms of biological role, transfers the 4'-phosphopantetheine moiety from coenzyme A to a Ser of acyl-carrier-protein. The sequence is that of Holo-[acyl-carrier-protein] synthase from Leuconostoc citreum (strain KM20).